The sequence spans 462 residues: O-methyltransferase CTB2 (462 aa).

Asp-289 lines the S-adenosyl-L-methionine pocket. His-340 serves as the catalytic Proton acceptor.

This sequence belongs to the class I-like SAM-binding methyltransferase superfamily. Cation-independent O-methyltransferase family. COMT subfamily.

The protein operates within mycotoxin biosynthesis. O-methyltransferase; part of the gene cluster that mediates the biosynthesis of cercosporin, a light-activated, non-host-selective toxin. The perylenequinone chromophore of cercosporin absorbs light energy to attain an electronically-activated triplet state and produces active oxygen species such as the hydroxyl radical, superoxide, hydrogen peroxide or singlet oxygen upon reaction with oxygen molecules. These reactive oxygen species cause damage to various cellular components including lipids, proteins and nucleic acids. The first step of cercosporin biosynthesis is performed by the polyketide synthase CTB1 which catalyzes the formation of nor-toralactone. The starter unit acyltransferase (SAT) domain of CTB1 initiates polyketide extension by the selective utilization of acetyl-CoA, which is elongated to the heptaketide in the beta-ketoacyl synthase (KS) domain by successive condensations with six malonyl units introduced by the malonyl acyltransferase (MAT) domain. The product template (PT) domain catalyzes C4-C9 and C2-C11 aldol cyclizations and dehydrations to a trihydroxynaphthalene, which is thought to be delivered to the thioesterase (TE) domain for product release. The bifunctional enzyme CTB3 then methylates nor-toralactone to toralactone before conducting an unusual oxidative aromatic ring opening. The O-methyltransferase CTB2 further methylates the nascent OH-6 of the CBT3 product, blocking further oxidation at this site before the reductase CTB6 reduces the 2-oxopropyl ketone at position C7, giving naphthalene. The FAD-dependent monooxygenase CTB5 in concert with the multicopper oxidase CTB12 are responsible for homodimerization of naphthalene with CTB7 installing the dioxepine moiety, finally producing cercosporin. The fasciclin domain-containing protein CTB11 might act with CTB5 and CTB12 whereas the roles of CTB9 and CTB10 have still to be elucidated. The polypeptide is O-methyltransferase CTB2 (Cercospora beticola (Sugarbeet leaf spot fungus)).